The primary structure comprises 310 residues: Olfactory receptor 5W2 (310 aa).

Residues 1 to 25 (MDWENCSSLTDFFLLGITNNPEMKV) lie on the Extracellular side of the membrane. A glycan (N-linked (GlcNAc...) asparagine) is linked at N5. A helical transmembrane segment spans residues 26–46 (TLFAVFLAVYIINFSANLGMI). Over 47–54 (VLIRMDYQ) the chain is Cytoplasmic. A helical membrane pass occupies residues 55–75 (LHTPMYFFLSHLSFCDLCYST). Residues 76 to 99 (ATGPKMLVDLLAKNKSIPFYGCAL) are Extracellular-facing. Residues 100–120 (QFLVFCIFADSECLLLSVMAF) form a helical membrane-spanning segment. Topologically, residues 121–139 (DRYKAIINPLLYTVNMSSR) are cytoplasmic. The chain crosses the membrane as a helical span at residues 140–160 (VCYLLLTGVYLVGIADALIHM). Residues 161-196 (TLAFRLCFCGSNEINHFFCDIPPLLLLSRSDTQVNE) lie on the Extracellular side of the membrane. The chain crosses the membrane as a helical span at residues 197-217 (LVLFTVFGFIELSTISGVFIS). Over 218-237 (YCYIILSVLEIHSAEGRFKA) the chain is Cytoplasmic. Residues 238-258 (LSTCTSHLSAVAIFQGTLLFM) traverse the membrane as a helical segment. Over 259–271 (YFRPSSSYSLDQD) the chain is Extracellular. Residues 272 to 292 (KMTSLFYTLVVPMLNPLIYSL) traverse the membrane as a helical segment. Residues 293 to 310 (RNKDVKEALKKLKNKILF) lie on the Cytoplasmic side of the membrane.

It belongs to the G-protein coupled receptor 1 family.

It is found in the cell membrane. Functionally, odorant receptor. The chain is Olfactory receptor 5W2 (OR5W2) from Homo sapiens (Human).